The chain runs to 1401 residues: DNA-directed RNA polymerase subunit beta' (1401 aa).

4 residues coordinate Zn(2+): Cys-70, Cys-72, Cys-85, and Cys-88. 3 residues coordinate Mg(2+): Asp-460, Asp-462, and Asp-464. Residues Cys-814, Cys-888, Cys-895, and Cys-898 each coordinate Zn(2+). A disordered region spans residues 1369 to 1388 (RQKQKAVEQEGPSAEQATDN).

It belongs to the RNA polymerase beta' chain family. As to quaternary structure, the RNAP catalytic core consists of 2 alpha, 1 beta, 1 beta' and 1 omega subunit. When a sigma factor is associated with the core the holoenzyme is formed, which can initiate transcription. Mg(2+) is required as a cofactor. Requires Zn(2+) as cofactor.

The catalysed reaction is RNA(n) + a ribonucleoside 5'-triphosphate = RNA(n+1) + diphosphate. DNA-dependent RNA polymerase catalyzes the transcription of DNA into RNA using the four ribonucleoside triphosphates as substrates. The chain is DNA-directed RNA polymerase subunit beta' from Aliivibrio fischeri (strain ATCC 700601 / ES114) (Vibrio fischeri).